A 325-amino-acid chain; its full sequence is MVISVLGAGAWGTAIAISLSGKKNVILWTRNKAIFESIKEKRESDKLPDCPISDNVSVKLAIEDAVNASVIILAVPTQSLREICHQLNDCNLKKNVAIILACKGIEKSTLKLPSEVVNEVLPNNPLAVFSGPSFAIEVARKLPYSMVLACQNEVLGLKLVSELQQENIKLYLSSDVIGIQVCAALKNVFAIACGVVLGRFGFNAHAALITKSMSEIKALYSAKVGDGNVDINTLLGPACLGDLVVTCTSLNSRNLSFGSKVANSNGSSAQQILSEGKSVIEGFNTAKSAFDLAEKLKIKMPICEAIYRLLYENTSIEDTISVLVN.

Positions 11, 30, and 103 each coordinate NADPH. Sn-glycerol 3-phosphate-binding residues include Lys-103, Gly-131, and Ser-133. Residue Ala-135 participates in NADPH binding. Sn-glycerol 3-phosphate is bound by residues Lys-186, Asp-242, Ser-252, Arg-253, and Asn-254. Lys-186 acts as the Proton acceptor in catalysis. Arg-253 provides a ligand contact to NADPH. 2 residues coordinate NADPH: Val-279 and Glu-281.

This sequence belongs to the NAD-dependent glycerol-3-phosphate dehydrogenase family.

It is found in the cytoplasm. The catalysed reaction is sn-glycerol 3-phosphate + NAD(+) = dihydroxyacetone phosphate + NADH + H(+). The enzyme catalyses sn-glycerol 3-phosphate + NADP(+) = dihydroxyacetone phosphate + NADPH + H(+). Its pathway is membrane lipid metabolism; glycerophospholipid metabolism. In terms of biological role, catalyzes the reduction of the glycolytic intermediate dihydroxyacetone phosphate (DHAP) to sn-glycerol 3-phosphate (G3P), the key precursor for phospholipid synthesis. The protein is Glycerol-3-phosphate dehydrogenase [NAD(P)+] of Wolbachia pipientis subsp. Culex pipiens (strain wPip).